The sequence spans 131 residues: Small ribosomal subunit protein uS8 (131 aa).

Belongs to the universal ribosomal protein uS8 family. As to quaternary structure, part of the 30S ribosomal subunit. Contacts proteins S5 and S12.

Its function is as follows. One of the primary rRNA binding proteins, it binds directly to 16S rRNA central domain where it helps coordinate assembly of the platform of the 30S subunit. This chain is Small ribosomal subunit protein uS8, found in Nitrosospira multiformis (strain ATCC 25196 / NCIMB 11849 / C 71).